A 296-amino-acid chain; its full sequence is NAD kinase (296 aa).

Catalysis depends on D73, which acts as the Proton acceptor. Residues 73 to 74, K78, 151 to 152, R178, D180, and 191 to 196 each bind NAD(+); these read DG, NE, and TAHAMS.

This sequence belongs to the NAD kinase family. The cofactor is a divalent metal cation.

It localises to the cytoplasm. The catalysed reaction is NAD(+) + ATP = ADP + NADP(+) + H(+). In terms of biological role, involved in the regulation of the intracellular balance of NAD and NADP, and is a key enzyme in the biosynthesis of NADP. Catalyzes specifically the phosphorylation on 2'-hydroxyl of the adenosine moiety of NAD to yield NADP. The chain is NAD kinase from Francisella tularensis subsp. holarctica (strain FTNF002-00 / FTA).